The sequence spans 250 residues: 2,3-bisphosphoglycerate-dependent phosphoglycerate mutase (250 aa).

Substrate is bound by residues 10 to 17, 23 to 24, R62, 89 to 92, K100, 116 to 117, and 185 to 186; these read RHGESQWN, TG, ERHY, RR, and GN. Catalysis depends on H11, which acts as the Tele-phosphohistidine intermediate. E89 functions as the Proton donor/acceptor in the catalytic mechanism.

Belongs to the phosphoglycerate mutase family. BPG-dependent PGAM subfamily. As to quaternary structure, homodimer.

The catalysed reaction is (2R)-2-phosphoglycerate = (2R)-3-phosphoglycerate. It functions in the pathway carbohydrate degradation; glycolysis; pyruvate from D-glyceraldehyde 3-phosphate: step 3/5. Functionally, catalyzes the interconversion of 2-phosphoglycerate and 3-phosphoglycerate. The chain is 2,3-bisphosphoglycerate-dependent phosphoglycerate mutase from Erwinia tasmaniensis (strain DSM 17950 / CFBP 7177 / CIP 109463 / NCPPB 4357 / Et1/99).